We begin with the raw amino-acid sequence, 164 residues long: Peroxynitrite isomerase 2 (164 aa).

The short motif at 17–23 (GSWAGRG) is the GXWXGXG element. His155 lines the heme b pocket.

The protein belongs to the nitrobindin family. As to quaternary structure, homodimer. Requires heme b as cofactor.

It carries out the reaction peroxynitrite = nitrate. Its pathway is nitrogen metabolism. In terms of biological role, heme-binding protein able to scavenge peroxynitrite and to protect free L-tyrosine against peroxynitrite-mediated nitration, by acting as a peroxynitrite isomerase that converts peroxynitrite to nitrate. Therefore, this protein likely plays a role in peroxynitrite sensing and in the detoxification of reactive nitrogen and oxygen species (RNS and ROS, respectively). Is able to bind nitric oxide (NO) in vitro, but may act as a sensor of peroxynitrite levels in vivo. The sequence is that of Peroxynitrite isomerase 2 from Mycobacterium bovis (strain BCG / Pasteur 1173P2).